We begin with the raw amino-acid sequence, 355 residues long: Ataxin-3-like protein (355 aa).

The Josephin domain maps to 1–180 (MDFIFHEKQE…DCEADQLLQI (180 aa)). Cysteine 14 serves as the catalytic Nucleophile. The Proton acceptor role is filled by histidine 119. Asparagine 134 is an active-site residue. Disordered stretches follow at residues 209 to 230 (LEKVSEESDESGTSDQDEEDFQ) and 253 to 331 (LSMQ…DISE). Positions 215-228 (ESDESGTSDQDEED) are enriched in acidic residues. UIM domains follow at residues 224-243 (QDEEDFQRALELSRQETNRE) and 244-258 (DEHLRSTIELSMQGS). The segment covering 253–276 (LSMQGSSGNTSQDLPKTSCVTPAS) has biased composition (polar residues). Residues 278–293 (QPKKIKEDYFEKHQQE) show a composition bias toward basic and acidic residues.

As to expression, widely expressed.

Its subcellular location is the nucleus. The enzyme catalyses Thiol-dependent hydrolysis of ester, thioester, amide, peptide and isopeptide bonds formed by the C-terminal Gly of ubiquitin (a 76-residue protein attached to proteins as an intracellular targeting signal).. Functionally, deubiquitinating enzyme that cleaves both 'Lys-48'-linked and 'Lys-63'-linked poly-ubiquitin chains (in vitro). Acts as a deubiquitinating enzyme for the transcription factor KLF5, playing a role in the regulation of KLF5 stability. This chain is Ataxin-3-like protein, found in Homo sapiens (Human).